The sequence spans 488 residues: Glutamyl-tRNA(Gln) amidotransferase subunit A (488 aa).

Residues K77 and S152 each act as charge relay system in the active site. Catalysis depends on S176, which acts as the Acyl-ester intermediate.

It belongs to the amidase family. GatA subfamily. In terms of assembly, heterotrimer of A, B and C subunits.

The catalysed reaction is L-glutamyl-tRNA(Gln) + L-glutamine + ATP + H2O = L-glutaminyl-tRNA(Gln) + L-glutamate + ADP + phosphate + H(+). Allows the formation of correctly charged Gln-tRNA(Gln) through the transamidation of misacylated Glu-tRNA(Gln) in organisms which lack glutaminyl-tRNA synthetase. The reaction takes place in the presence of glutamine and ATP through an activated gamma-phospho-Glu-tRNA(Gln). This chain is Glutamyl-tRNA(Gln) amidotransferase subunit A, found in Streptococcus equi subsp. zooepidemicus (strain H70).